The following is a 207-amino-acid chain: Uracil phosphoribosyltransferase (207 aa).

5-phospho-alpha-D-ribose 1-diphosphate-binding positions include R77, R102, and D129–S137. Uracil is bound by residues I192 and G197–A199. Residue D198 participates in 5-phospho-alpha-D-ribose 1-diphosphate binding.

It belongs to the UPRTase family. Mg(2+) serves as cofactor.

The catalysed reaction is UMP + diphosphate = 5-phospho-alpha-D-ribose 1-diphosphate + uracil. It functions in the pathway pyrimidine metabolism; UMP biosynthesis via salvage pathway; UMP from uracil: step 1/1. Its activity is regulated as follows. Allosterically activated by GTP. Catalyzes the conversion of uracil and 5-phospho-alpha-D-ribose 1-diphosphate (PRPP) to UMP and diphosphate. The sequence is that of Uracil phosphoribosyltransferase from Nocardia farcinica (strain IFM 10152).